The following is a 327-amino-acid chain: Beta-ketoacyl-[acyl-carrier-protein] synthase III 2 (327 aa).

Active-site residues include cysteine 114 and histidine 251. Residues 252–256 (SANLR) form an ACP-binding region. Residue asparagine 281 is part of the active site.

The protein belongs to the thiolase-like superfamily. FabH family. In terms of assembly, homodimer.

Its subcellular location is the cytoplasm. It carries out the reaction malonyl-[ACP] + acetyl-CoA + H(+) = 3-oxobutanoyl-[ACP] + CO2 + CoA. Its pathway is lipid metabolism; fatty acid biosynthesis. Catalyzes the condensation reaction of fatty acid synthesis by the addition to an acyl acceptor of two carbons from malonyl-ACP. Catalyzes the first condensation reaction which initiates fatty acid synthesis and may therefore play a role in governing the total rate of fatty acid production. Possesses both acetoacetyl-ACP synthase and acetyl transacylase activities. Its substrate specificity determines the biosynthesis of branched-chain and/or straight-chain of fatty acids. In Bacillus cereus (strain ATCC 14579 / DSM 31 / CCUG 7414 / JCM 2152 / NBRC 15305 / NCIMB 9373 / NCTC 2599 / NRRL B-3711), this protein is Beta-ketoacyl-[acyl-carrier-protein] synthase III 2.